A 224-amino-acid chain; its full sequence is tRNA (guanine-N(7)-)-methyltransferase (224 aa).

S-adenosyl-L-methionine contacts are provided by Glu-45, Glu-70, Asp-97, and Asp-119. Residue Asp-119 is part of the active site. Substrate is bound by residues Lys-123, Asp-155, and Thr-199–Glu-202.

It belongs to the class I-like SAM-binding methyltransferase superfamily. TrmB family.

It catalyses the reaction guanosine(46) in tRNA + S-adenosyl-L-methionine = N(7)-methylguanosine(46) in tRNA + S-adenosyl-L-homocysteine. It functions in the pathway tRNA modification; N(7)-methylguanine-tRNA biosynthesis. Functionally, catalyzes the formation of N(7)-methylguanine at position 46 (m7G46) in tRNA. This chain is tRNA (guanine-N(7)-)-methyltransferase, found in Ureaplasma parvum serovar 3 (strain ATCC 27815 / 27 / NCTC 11736).